The following is a 228-amino-acid chain: Cytidylate kinase (228 aa).

10-18 (GPSGSGKGT) provides a ligand contact to ATP.

It belongs to the cytidylate kinase family. Type 1 subfamily.

Its subcellular location is the cytoplasm. It catalyses the reaction CMP + ATP = CDP + ADP. The catalysed reaction is dCMP + ATP = dCDP + ADP. The protein is Cytidylate kinase of Acinetobacter baumannii (strain SDF).